We begin with the raw amino-acid sequence, 596 residues long: Elongation factor 4 (596 aa).

The tr-type G domain maps to 2-184; the sequence is KNIRNFSIIA…TIVKNIPSPA (183 aa). Residues 14 to 19 and 131 to 134 each bind GTP; these read DHGKST and NKID.

The protein belongs to the TRAFAC class translation factor GTPase superfamily. Classic translation factor GTPase family. LepA subfamily.

It is found in the cell inner membrane. The catalysed reaction is GTP + H2O = GDP + phosphate + H(+). Functionally, required for accurate and efficient protein synthesis under certain stress conditions. May act as a fidelity factor of the translation reaction, by catalyzing a one-codon backward translocation of tRNAs on improperly translocated ribosomes. Back-translocation proceeds from a post-translocation (POST) complex to a pre-translocation (PRE) complex, thus giving elongation factor G a second chance to translocate the tRNAs correctly. Binds to ribosomes in a GTP-dependent manner. The sequence is that of Elongation factor 4 from Colwellia psychrerythraea (strain 34H / ATCC BAA-681) (Vibrio psychroerythus).